Here is a 477-residue protein sequence, read N- to C-terminus: UDP-N-acetylmuramate--L-alanine ligase (477 aa).

An ATP-binding site is contributed by 112–118; it reads GAHGKTT.

The protein belongs to the MurCDEF family.

It is found in the cytoplasm. It catalyses the reaction UDP-N-acetyl-alpha-D-muramate + L-alanine + ATP = UDP-N-acetyl-alpha-D-muramoyl-L-alanine + ADP + phosphate + H(+). Its pathway is cell wall biogenesis; peptidoglycan biosynthesis. Its function is as follows. Cell wall formation. This chain is UDP-N-acetylmuramate--L-alanine ligase, found in Acidovorax ebreus (strain TPSY) (Diaphorobacter sp. (strain TPSY)).